Here is a 245-residue protein sequence, read N- to C-terminus: 1-(5-phosphoribosyl)-5-[(5-phosphoribosylamino)methylideneamino] imidazole-4-carboxamide isomerase (245 aa).

The Proton acceptor role is filled by Asp7. The active-site Proton donor is Asp129.

It belongs to the HisA/HisF family.

It localises to the cytoplasm. It catalyses the reaction 1-(5-phospho-beta-D-ribosyl)-5-[(5-phospho-beta-D-ribosylamino)methylideneamino]imidazole-4-carboxamide = 5-[(5-phospho-1-deoxy-D-ribulos-1-ylimino)methylamino]-1-(5-phospho-beta-D-ribosyl)imidazole-4-carboxamide. It participates in amino-acid biosynthesis; L-histidine biosynthesis; L-histidine from 5-phospho-alpha-D-ribose 1-diphosphate: step 4/9. In Cronobacter sakazakii (strain ATCC BAA-894) (Enterobacter sakazakii), this protein is 1-(5-phosphoribosyl)-5-[(5-phosphoribosylamino)methylideneamino] imidazole-4-carboxamide isomerase.